The sequence spans 86 residues: CLAVATA3/ESR (CLE)-related protein 7 (86 aa).

Positions 1–22 are cleaved as a signal peptide; it reads MASKALLLFVMLTFLLVIEMEG. Asparagine 46 is a glycosylation site (N-linked (GlcNAc...) asparagine). Positions 63 to 86 are disordered; it reads VDRFSPGGPDPQHHSYPLSSKPRI. A hydroxyproline mark is found at proline 68 and proline 71. A glycan (O-linked (Ara...) hydroxyproline) is linked at proline 71.

It belongs to the CLV3/ESR signal peptide family. The O-glycosylation (arabinosylation) of the hydroxyproline Pro-71 enhances binding affinity of the CLE7p peptide for its receptor. In terms of tissue distribution, expressed in roots and seedlings.

It is found in the secreted. The protein resides in the extracellular space. Functionally, extracellular signal peptide that regulates cell fate. The chain is CLAVATA3/ESR (CLE)-related protein 7 from Arabidopsis thaliana (Mouse-ear cress).